A 521-amino-acid chain; its full sequence is Glutamyl-tRNA(Gln) amidotransferase subunit B, mitochondrial (521 aa).

The N-terminal 22 residues, 1–22, are a transit peptide targeting the mitochondrion; sequence MIALLRWGIARPSAPLRWSRCF.

It belongs to the GatB/GatE family. GatB subfamily. As to quaternary structure, subunit of the heterotrimeric GatCAB amidotransferase (AdT) complex, composed of A, B and C subunits.

It is found in the mitochondrion. The catalysed reaction is L-glutamyl-tRNA(Gln) + L-glutamine + ATP + H2O = L-glutaminyl-tRNA(Gln) + L-glutamate + ADP + phosphate + H(+). Allows the formation of correctly charged Gln-tRNA(Gln) through the transamidation of misacylated Glu-tRNA(Gln) in the mitochondria. The reaction takes place in the presence of glutamine and ATP through an activated gamma-phospho-Glu-tRNA(Gln). The sequence is that of Glutamyl-tRNA(Gln) amidotransferase subunit B, mitochondrial from Cryptococcus neoformans var. neoformans serotype D (strain JEC21 / ATCC MYA-565) (Filobasidiella neoformans).